The chain runs to 130 residues: Small ribosomal subunit protein uS8 (130 aa).

The protein belongs to the universal ribosomal protein uS8 family.

The protein is Small ribosomal subunit protein uS8 (RPS15A) of Paracentrotus lividus (Common sea urchin).